A 105-amino-acid chain; its full sequence is Large ribosomal subunit protein uL24 (105 aa).

The protein belongs to the universal ribosomal protein uL24 family. Part of the 50S ribosomal subunit.

One of two assembly initiator proteins, it binds directly to the 5'-end of the 23S rRNA, where it nucleates assembly of the 50S subunit. Functionally, one of the proteins that surrounds the polypeptide exit tunnel on the outside of the subunit. The protein is Large ribosomal subunit protein uL24 of Xanthomonas oryzae pv. oryzae (strain PXO99A).